Reading from the N-terminus, the 450-residue chain is Phosphoglucosamine mutase (450 aa).

Catalysis depends on Ser-103, which acts as the Phosphoserine intermediate. Ser-103, Asp-243, Asp-245, and Asp-247 together coordinate Mg(2+). Ser-103 is modified (phosphoserine).

The protein belongs to the phosphohexose mutase family. Requires Mg(2+) as cofactor. In terms of processing, activated by phosphorylation.

The catalysed reaction is alpha-D-glucosamine 1-phosphate = D-glucosamine 6-phosphate. In terms of biological role, catalyzes the conversion of glucosamine-6-phosphate to glucosamine-1-phosphate. The polypeptide is Phosphoglucosamine mutase (Lactobacillus delbrueckii subsp. bulgaricus (strain ATCC 11842 / DSM 20081 / BCRC 10696 / JCM 1002 / NBRC 13953 / NCIMB 11778 / NCTC 12712 / WDCM 00102 / Lb 14)).